Reading from the N-terminus, the 136-residue chain is Replication enhancer (136 aa).

This sequence belongs to the geminiviridae replication enhancer protein family. In terms of assembly, homooligomer. Interacts with the replication-associated protein (REP). Interacts with host proliferating cell nuclear antigen (PCNA). Interacts with host retinoblastoma-related protein 1 (RBR1), and may thereby deregulate the host cell cycle. Oligomerization and interaction with PCNA are necessary for optimal replication enhancement.

Its function is as follows. Increases viral DNA accumulation. Enhances infectivity and symptom expression. In Beet curly top virus (strain California/Logan) (BCTV), this protein is Replication enhancer.